Consider the following 94-residue polypeptide: MKILAVVLISVIVLNTANGENYYPQKYTNDYYGCQQQTDAFCDKVCKLHLAESGFCDQSWGLAKACKCVNVSYDNSFYFNALESQCPLLNKSAA.

Residues M1–G19 form the signal peptide. In terms of domain architecture, LCN-type CS-alpha/beta spans E20 to P87. 3 cysteine pairs are disulfide-bonded: C34–C56, C42–C66, and C46–C68.

The protein belongs to the long (3 C-C) scorpion toxin superfamily. In terms of assembly, homodimer; disulfide-linked or monomer (edited version) or heterodimer of an alpha chain (AC P0CI44 or AC P0CI45) and this beta chain (non-edited version). In terms of tissue distribution, expressed by the venom gland.

It localises to the secreted. In terms of biological role, the homodimer inhibits HMG-CoA reductase (HMGCR) (32% of inhibition produced by 0.6 uM), a glycoprotein involved in the control of cholesterol biosynthesis. The inhibitory effects of bumarsin are seen at much lower concentrations (0.6 uM) than that for statins such as atorvastatin (5 mM) and simvastatin (10 uM). In addition to inhibition of HMG-CoA reductase, this protein lowers cholesterol levels by inducing steroid hormone synthesis via StAR, and by increasing reverse cholesterol transport mediated by the induction of ABCA1 and APOA1. Its function is as follows. The heterodimer non-edited LVP1 induces lipolysis in rat adipocytes. Induction of lipolysis by LVP1 appears to be mediated through the beta-2 adrenergic receptor pathway (ADRB2). Functionally, the monomer edited version, similar to alpha-toxins, may modulate voltage-gated sodium channels (Nav) and may block voltage-gated potassium channels (Kv). This chain is Lipolysis-activating peptide 1-beta chain, found in Lychas mucronatus (Chinese swimming scorpion).